The chain runs to 649 residues: Echinoderm microtubule-associated protein-like 2 (649 aa).

Residues 10–649 form a tandem atypical propeller in EMLs region; it reads KEVIFSMEEG…DTSVLQWRVA (640 aa). WD repeat units follow at residues 56 to 93, 97 to 144, 151 to 192, 195 to 234, 241 to 280, 285 to 323, 369 to 406, 410 to 447, 452 to 489, 495 to 535, 564 to 602, and 609 to 648; these read KLDW…LYSV, RQRH…VWDS, HVLG…VWDW, ESKV…FWSL, KRQG…VWGK, ITQE…LWGS, FSLL…LWSS, QPVW…LLDT, LVAI…VYTV, KVSR…YWDA, FGIW…LFSY, and ALSH…QWRV.

This sequence belongs to the WD repeat EMAP family. As to quaternary structure, interacts with GRID2 and may also interact with GRID1. Interacts with EML3. Binds unpolymerized tubulins via its WD repeat region. Widely expressed in both brain and peripheral tissues, including brainstem and enrichment in the postsynaptic density, PSD.

It localises to the cytoplasm. The protein resides in the cytoskeleton. The protein localises to the spindle. Functionally, tubulin binding protein that inhibits microtubule nucleation and growth, resulting in shorter microtubules. This is Echinoderm microtubule-associated protein-like 2 (Eml2) from Rattus norvegicus (Rat).